Consider the following 998-residue polypeptide: Beta-galactosidase (998 aa).

Glu-431 acts as the Proton donor in catalysis. The active-site Nucleophile is Glu-508.

It belongs to the glycosyl hydrolase 2 family.

The enzyme catalyses Hydrolysis of terminal non-reducing beta-D-galactose residues in beta-D-galactosides.. The sequence is that of Beta-galactosidase (lacZ) from Lactococcus lactis subsp. lactis (strain IL1403) (Streptococcus lactis).